Reading from the N-terminus, the 338-residue chain is Glycerol-3-phosphate dehydrogenase [NAD(P)+] (338 aa).

NADPH is bound by residues Ser-12, Trp-13, and Lys-110. Lys-110, Gly-141, and Ser-143 together coordinate sn-glycerol 3-phosphate. Ala-145 serves as a coordination point for NADPH. The sn-glycerol 3-phosphate site is built by Lys-196, Asp-249, Ser-259, Arg-260, and Asn-261. Catalysis depends on Lys-196, which acts as the Proton acceptor. Residue Arg-260 participates in NADPH binding. 2 residues coordinate NADPH: Val-284 and Glu-286.

This sequence belongs to the NAD-dependent glycerol-3-phosphate dehydrogenase family.

Its subcellular location is the cytoplasm. It catalyses the reaction sn-glycerol 3-phosphate + NAD(+) = dihydroxyacetone phosphate + NADH + H(+). The enzyme catalyses sn-glycerol 3-phosphate + NADP(+) = dihydroxyacetone phosphate + NADPH + H(+). It functions in the pathway membrane lipid metabolism; glycerophospholipid metabolism. Its function is as follows. Catalyzes the reduction of the glycolytic intermediate dihydroxyacetone phosphate (DHAP) to sn-glycerol 3-phosphate (G3P), the key precursor for phospholipid synthesis. This Pediococcus pentosaceus (strain ATCC 25745 / CCUG 21536 / LMG 10740 / 183-1w) protein is Glycerol-3-phosphate dehydrogenase [NAD(P)+].